A 517-amino-acid chain; its full sequence is uncharacterized protein (517 aa).

Transmembrane regions (helical) follow at residues 35–55 (FSLI…IPGI), 81–101 (IAIY…GVFN), 102–122 (IGIS…ILKV), 135–155 (IITI…VAAL), 164–184 (VVSA…LVGT), 223–243 (LVIA…TVFG), 268–288 (FLSF…VYTA), 302–322 (FGIT…LIAL), 328–348 (IVIV…AGLN), and 352–372 (ASLV…MIYI).

The protein resides in the cell membrane. This is an uncharacterized protein from Mycoplasma pneumoniae (strain ATCC 29342 / M129 / Subtype 1) (Mycoplasmoides pneumoniae).